A 465-amino-acid polypeptide reads, in one-letter code: Chromosomal replication initiator protein DnaA (465 aa).

Residues 1–85 (MSGFWESCLQ…IALVIGSGKA (85 aa)) are domain I, interacts with DnaA modulators. A domain II region spans residues 85–129 (ATAARIQATTTDSGQNAPANPATTSEKRTAASEKARGKGSNYEKS). Residues 93–108 (TTTDSGQNAPANPATT) show a composition bias toward polar residues. The tract at residues 93–125 (TTTDSGQNAPANPATTSEKRTAASEKARGKGSN) is disordered. Over residues 109 to 125 (SEKRTAASEKARGKGSN) the composition is skewed to basic and acidic residues. Residues 130 to 346 (RLFPSFTFDN…GALKKVLAYS (217 aa)) form a domain III, AAA+ region region. ATP-binding residues include G174, G176, K177, and T178. The domain IV, binds dsDNA stretch occupies residues 347-465 (SFHGRVIALD…LHVLLQVLKG (119 aa)).

Belongs to the DnaA family. In terms of assembly, oligomerizes as a right-handed, spiral filament on DNA at oriC.

It localises to the cytoplasm. In terms of biological role, plays an essential role in the initiation and regulation of chromosomal replication. ATP-DnaA binds to the origin of replication (oriC) to initiate formation of the DNA replication initiation complex once per cell cycle. Binds the DnaA box (a 9 base pair repeat at the origin) and separates the double-stranded (ds)DNA. Forms a right-handed helical filament on oriC DNA; dsDNA binds to the exterior of the filament while single-stranded (ss)DNA is stabiized in the filament's interior. The ATP-DnaA-oriC complex binds and stabilizes one strand of the AT-rich DNA unwinding element (DUE), permitting loading of DNA polymerase. After initiation quickly degrades to an ADP-DnaA complex that is not apt for DNA replication. Binds acidic phospholipids. The chain is Chromosomal replication initiator protein DnaA from Dechloromonas aromatica (strain RCB).